The primary structure comprises 937 residues: MGGSASSQLDEGKCAYIRGKTEASIKNFSPYYSRQYSVAFCNHVRSEVEQQRDLTSQFLKTKPPLEPGTVLYEAELSQFAEDIRKWKDRYVVVKNDFAVESYENKEAYQRGAVPKSRILPAGGKVLTSEEEYSLLSDKHFPDPTASSEKNSQPFLVLPKAFPVYLWQPYLRHGYFCFHEAAEQQKFSALLNDCIRHLNHDYMKQTTFEAQAFLEAVQFFRQEKGHYGAWEVITGDEVQILSKLVMEELLPTLQTDLLPKLKGKKNDRKRAWFGLLEEAYNLVQHQVSEGLSALKEECRALTKDLEGTIRSDMDQIVNSKNFLTGKIRAMVAQPAENRCGESVQPFLASILEELMGPVSSGFSEVRALFEKEVDELSQSFHTTQDGAQLKECLDQLMKLPLDSVKMEPCYTKVTLLPERLLDLQSRFRFPHVDLVVQRTQNYMQELMENAVFTFEQLLSPYLQGEASRTAVAIEKVKLRVLKQYDYDSSTIRKKIFQEALIQITLPTVQKALASTCKPELQKYEQFIFADHTNMIHVENIYEEILYQILLDETLKVITEAAILKKHNLFEDNMALPSESVSSLTDLKTSMGSNQASPARGASAILPGAPGDEAPGSEVFQGPEEKQQQPGVPGSLAREESASISGSSPPSGEDGQVSVSGVDNSAGNPLSADNSAGPLSSHLSEAEAGEPPKDEETAHKRPESSAVPGSLRELKELLTVTVFVESAPEIGNDTLNGTPVPQEDKKEEEEEEESKIHPEASGPAAIQQDSCEESEVREREAHPMPLEAEAPGVNLGTLPEGRGPTSQSTGEGLTENTSCLGPIEEPSEAQGPTEEVLLATVSTQDSTEAGGEAVHSVTVTPQEDATLSSNPICPVENNEGPQVSEDQEVLGGNDSPALAMDTEQINDAHVYECHWEVEDAPSADILDVHDCDVGSPGEW.

The N-myristoyl glycine moiety is linked to residue glycine 2. Serine 578, serine 581, serine 595, serine 601, and serine 646 each carry phosphoserine. Positions 584–595 are enriched in polar residues; sequence DLKTSMGSNQAS. Disordered regions lie at residues 584–710 and 724–891; these read DLKT…GSLR and SAPE…LGGN. Residues 640–651 are compositionally biased toward low complexity; sequence ASISGSSPPSGE. A compositionally biased stretch (polar residues) spans 655–681; that stretch reads VSVSGVDNSAGNPLSADNSAGPLSSHL. Residues 688–701 show a composition bias toward basic and acidic residues; sequence EPPKDEETAHKRPE. A phosphoserine mark is found at serine 708 and serine 768. Composition is skewed to polar residues over residues 802 to 817 and 855 to 869; these read PTSQSTGEGLTENTSC and VTVTPQEDATLSSNP.

This sequence belongs to the Niban family. In terms of tissue distribution, detected in brain, lung, spleen and skeletal muscle. Expressed in small renal tumors but not in normal kidney.

The protein resides in the cytoplasm. Its subcellular location is the membrane. Functionally, regulates phosphorylation of a number of proteins involved in translation regulation including EIF2A, EIF4EBP1 and RPS6KB1. May be involved in the endoplasmic reticulum stress response. This Rattus norvegicus (Rat) protein is Protein Niban 1.